We begin with the raw amino-acid sequence, 507 residues long: ATP synthase subunit alpha, chloroplastic (507 aa).

ATP is bound at residue 170-177; the sequence is GDRQTGKT. The residue at position 257 (Thr257) is a Phosphothreonine.

This sequence belongs to the ATPase alpha/beta chains family. F-type ATPases have 2 components, CF(1) - the catalytic core - and CF(0) - the membrane proton channel. CF(1) has five subunits: alpha(3), beta(3), gamma(1), delta(1), epsilon(1). CF(0) has four main subunits: a, b, b' and c.

The protein resides in the plastid. It localises to the chloroplast thylakoid membrane. The enzyme catalyses ATP + H2O + 4 H(+)(in) = ADP + phosphate + 5 H(+)(out). Its function is as follows. Produces ATP from ADP in the presence of a proton gradient across the membrane. The alpha chain is a regulatory subunit. The protein is ATP synthase subunit alpha, chloroplastic of Crucihimalaya wallichii (Rock-cress).